Here is a 98-residue protein sequence, read N- to C-terminus: Large ribosomal subunit protein eL21 (98 aa).

A compositionally biased stretch (basic residues) spans 1–24; the sequence is MVKKAHSFRRKTRGKLSKHPRRRG. A disordered region spans residues 1-27; that stretch reads MVKKAHSFRRKTRGKLSKHPRRRGLPP.

The protein belongs to the eukaryotic ribosomal protein eL21 family.

The sequence is that of Large ribosomal subunit protein eL21 from Thermococcus gammatolerans (strain DSM 15229 / JCM 11827 / EJ3).